We begin with the raw amino-acid sequence, 237 residues long: Ribonuclease PH (237 aa).

Residues Arg-86 and Gly-124 to Arg-126 each bind phosphate.

This sequence belongs to the RNase PH family. In terms of assembly, homohexameric ring arranged as a trimer of dimers.

It carries out the reaction tRNA(n+1) + phosphate = tRNA(n) + a ribonucleoside 5'-diphosphate. In terms of biological role, phosphorolytic 3'-5' exoribonuclease that plays an important role in tRNA 3'-end maturation. Removes nucleotide residues following the 3'-CCA terminus of tRNAs; can also add nucleotides to the ends of RNA molecules by using nucleoside diphosphates as substrates, but this may not be physiologically important. Probably plays a role in initiation of 16S rRNA degradation (leading to ribosome degradation) during starvation. This Pseudoalteromonas translucida (strain TAC 125) protein is Ribonuclease PH.